A 57-amino-acid polypeptide reads, in one-letter code: UPF0391 membrane protein RPD_2934 (57 aa).

2 consecutive transmembrane segments (helical) span residues 6-26 (WALIFLVISVVAGIFGFTGVS) and 35-55 (ILFYIFAAIFIVLLILGFTIF).

The protein belongs to the UPF0391 family.

The protein localises to the cell membrane. This chain is UPF0391 membrane protein RPD_2934, found in Rhodopseudomonas palustris (strain BisB5).